Consider the following 515-residue polypeptide: Sugar transport protein MST4 (515 aa).

Over 1–17 the chain is Cytoplasmic; the sequence is MAGGFSVSGSGVEFEAK. The helical transmembrane segment at 18–38 threads the bilayer; the sequence is ITPIVIISCIMAATGGLMFGY. At 39–78 the chain is on the extracellular side; the sequence is DVGISGGVTSMDDFLREFFPTVLKKKHEDKESNYCKYDNQ. Residues 79-99 traverse the membrane as a helical segment; the sequence is GLQLFTSSLYLAGLTATFFAS. The Cytoplasmic portion of the chain corresponds to 100 to 108; the sequence is YTTRRLGRR. The helical transmembrane segment at 109-129 threads the bilayer; the sequence is LTMLIAGVFFIVGVIFNGAAQ. Residues 130–138 lie on the Extracellular side of the membrane; the sequence is NLAMLIVGR. A helical membrane pass occupies residues 139–159; the sequence is ILLGCGVGFANQAVPLFLSEI. Over 160–165 the chain is Cytoplasmic; the sequence is APTRIR. A helical membrane pass occupies residues 166 to 186; the sequence is GGLNILFQLNVTIGILFANLV. At 187–199 the chain is on the extracellular side; it reads NYGTAKIHPWGWR. Residues 200-220 form a helical membrane-spanning segment; it reads LSLSLAGIPAALLTLGALFVV. At 221–280 the chain is on the cytoplasmic side; that stretch reads DTPNSLIERGRLEEGKAVLRKIRGTDNVEPEFNEIVEASRVAQEVKHPFRNLLQRRNRPQ. Residues 281–301 form a helical membrane-spanning segment; sequence LVIAVLLQIFQQFTGINAIMF. Residues 302-315 lie on the Extracellular side of the membrane; that stretch reads YAPVLFNTLGFKTD. The helical transmembrane segment at 316–336 threads the bilayer; it reads ASLYSAVITGAVNVLSTLVSV. Residues 337 to 347 are Cytoplasmic-facing; it reads YSVDRVGRRML. Residues 348–368 traverse the membrane as a helical segment; sequence LLEAGVQMFLSQVAIAVVLGI. Topologically, residues 369–379 are extracellular; sequence KVTDRSDNLGH. A helical transmembrane segment spans residues 380–400; it reads GWAIMVVVMVCTFVSSFAWSW. Residues 401 to 422 lie on the Cytoplasmic side of the membrane; that stretch reads GPLGWLIPSETFPLETRSAGQS. The chain crosses the membrane as a helical span at residues 423 to 443; it reads VTVCVNLLFTFVIAQAFLSML. Topologically, residues 444–448 are extracellular; that stretch reads CHLKY. A helical transmembrane segment spans residues 449–469; the sequence is AIFAFFSAWVVVMSLFVLFFL. Residues 470 to 515 lie on the Cytoplasmic side of the membrane; sequence PETKNIPIEEMTERVWKQHWFWKRFMDDADKHHVVPNGGKSNGATV.

Belongs to the major facilitator superfamily. Sugar transporter (TC 2.A.1.1) family. As to expression, expressed in roots, shoots, leaf blades, leaf sheaths, anthers, ovaries and embryos.

Its subcellular location is the membrane. Functionally, mediates active uptake of hexoses by sugar:proton symport. Can transport glucose, fructose, mannose and galactose. Can transport xylose and ribose. This Oryza sativa subsp. japonica (Rice) protein is Sugar transport protein MST4.